The chain runs to 264 residues: S-adenosylmethionine decarboxylase proenzyme (264 aa).

Ser-112 acts as the Schiff-base intermediate with substrate; via pyruvic acid in catalysis. Ser-112 bears the Pyruvic acid (Ser); by autocatalysis mark. Catalysis depends on His-117, which acts as the Proton acceptor; for processing activity. Cys-140 (proton donor; for catalytic activity) is an active-site residue.

The protein belongs to the prokaryotic AdoMetDC family. Type 2 subfamily. As to quaternary structure, heterooctamer of four alpha and four beta chains arranged as a tetramer of alpha/beta heterodimers. It depends on pyruvate as a cofactor. Post-translationally, is synthesized initially as an inactive proenzyme. Formation of the active enzyme involves a self-maturation process in which the active site pyruvoyl group is generated from an internal serine residue via an autocatalytic post-translational modification. Two non-identical subunits are generated from the proenzyme in this reaction, and the pyruvate is formed at the N-terminus of the alpha chain, which is derived from the carboxyl end of the proenzyme. The post-translation cleavage follows an unusual pathway, termed non-hydrolytic serinolysis, in which the side chain hydroxyl group of the serine supplies its oxygen atom to form the C-terminus of the beta chain, while the remainder of the serine residue undergoes an oxidative deamination to produce ammonia and the pyruvoyl group blocking the N-terminus of the alpha chain.

It carries out the reaction S-adenosyl-L-methionine + H(+) = S-adenosyl 3-(methylsulfanyl)propylamine + CO2. It functions in the pathway amine and polyamine biosynthesis; S-adenosylmethioninamine biosynthesis; S-adenosylmethioninamine from S-adenosyl-L-methionine: step 1/1. Its function is as follows. Catalyzes the decarboxylation of S-adenosylmethionine to S-adenosylmethioninamine (dcAdoMet), the propylamine donor required for the synthesis of the polyamines spermine and spermidine from the diamine putrescine. In Salmonella typhi, this protein is S-adenosylmethionine decarboxylase proenzyme.